A 234-amino-acid polypeptide reads, in one-letter code: Lipoprotein-releasing system ATP-binding protein LolD (234 aa).

The ABC transporter domain occupies 13–233; sequence IYLHEIKRQY…SLSDGQVVEL (221 aa). An ATP-binding site is contributed by 49–56; sequence APSGSGKS.

This sequence belongs to the ABC transporter superfamily. Lipoprotein translocase (TC 3.A.1.125) family. In terms of assembly, the complex is composed of two ATP-binding proteins (LolD) and two transmembrane proteins (LolC and LolE).

The protein localises to the cell inner membrane. Its function is as follows. Part of the ABC transporter complex LolCDE involved in the translocation of mature outer membrane-directed lipoproteins, from the inner membrane to the periplasmic chaperone, LolA. Responsible for the formation of the LolA-lipoprotein complex in an ATP-dependent manner. The sequence is that of Lipoprotein-releasing system ATP-binding protein LolD from Bradyrhizobium diazoefficiens (strain JCM 10833 / BCRC 13528 / IAM 13628 / NBRC 14792 / USDA 110).